Here is a 311-residue protein sequence, read N- to C-terminus: MDKSIKREHVLREIHELLASNGFETSHIYERSCFDLMARRKLLLLLLKVLVNIDGINSLQAHEIRTLAHTFLASPIIVGVRSKTEPLKEDVVYERHGIPAVAPETFRNMVADGEYPEIIADRGGYYVHIDGKTLREVREEYNLSLKDLADLAHVSRKTIYKYENGLARASAETAMILEEILNIRITLSIDIFSVPDRDEIEIKPSGRLADIGFGMIETHKTPFDAVAKEIKFDNTVITNLEKERDSRTLRRMAVPLKDLSLVSGSESVFIIDNPRINENIEGIPVIKSWEIGEMESSREFLKVIAERKTCS.

The HTH cro/C1-type domain maps to 134–192; that stretch reads LREVREEYNLSLKDLADLAHVSRKTIYKYENGLARASAETAMILEEILNIRITLSIDIF. Residues 145–164 constitute a DNA-binding region (H-T-H motif); it reads LKDLADLAHVSRKTIYKYEN.

The chain is Putative HTH-type transcriptional regulatory protein MTH_967 from Methanothermobacter thermautotrophicus (strain ATCC 29096 / DSM 1053 / JCM 10044 / NBRC 100330 / Delta H) (Methanobacterium thermoautotrophicum).